The chain runs to 373 residues: UDP-3-O-acylglucosamine N-acyltransferase 2 (373 aa).

Histidine 239 functions as the Proton acceptor in the catalytic mechanism. The tract at residues 345 to 373 (KTNGKSGQADAPPKVALECHGTTGDAPQG) is disordered.

Belongs to the transferase hexapeptide repeat family. LpxD subfamily. As to quaternary structure, homotrimer.

It carries out the reaction a UDP-3-O-[(3R)-3-hydroxyacyl]-alpha-D-glucosamine + a (3R)-hydroxyacyl-[ACP] = a UDP-2-N,3-O-bis[(3R)-3-hydroxyacyl]-alpha-D-glucosamine + holo-[ACP] + H(+). It participates in bacterial outer membrane biogenesis; LPS lipid A biosynthesis. Catalyzes the N-acylation of UDP-3-O-acylglucosamine using 3-hydroxyacyl-ACP as the acyl donor. Is involved in the biosynthesis of lipid A, a phosphorylated glycolipid that anchors the lipopolysaccharide to the outer membrane of the cell. In Gloeobacter violaceus (strain ATCC 29082 / PCC 7421), this protein is UDP-3-O-acylglucosamine N-acyltransferase 2.